The following is a 367-amino-acid chain: Heme A synthase (367 aa).

Transmembrane regions (helical) follow at residues 12-32 (GAVR…VAVG), 99-119 (LLGR…WWQG), 127-147 (LGLL…WIMV), 163-183 (LALH…LAAG), and 198-218 (ATAL…GLVA). His-264 lines the heme pocket. Transmembrane regions (helical) follow at residues 266–286 (VTAY…RLTG), 296–316 (GVVI…LLAV), and 317–337 (PLWA…MATV). Heme is bound at residue His-324.

This sequence belongs to the COX15/CtaA family. Type 2 subfamily. In terms of assembly, interacts with CtaB. Requires heme b as cofactor.

The protein localises to the cell membrane. The enzyme catalyses Fe(II)-heme o + 2 A + H2O = Fe(II)-heme a + 2 AH2. It participates in porphyrin-containing compound metabolism; heme A biosynthesis; heme A from heme O: step 1/1. In terms of biological role, catalyzes the conversion of heme O to heme A by two successive hydroxylations of the methyl group at C8. The first hydroxylation forms heme I, the second hydroxylation results in an unstable dihydroxymethyl group, which spontaneously dehydrates, resulting in the formyl group of heme A. The sequence is that of Heme A synthase from Methylobacterium radiotolerans (strain ATCC 27329 / DSM 1819 / JCM 2831 / NBRC 15690 / NCIMB 10815 / 0-1).